Here is a 368-residue protein sequence, read N- to C-terminus: MQSSLARPLRPPVLAGCGGRRGHGAPRGSVSVARCRAEAAPPTVGTASRAPAGPYTGRDPEVKKPAWLRQRAAQGDKYARLRESIGELKLNTVCVEAQCPNIGECWNGGGGAGGEGDGIATATIMVLGDTCTRGCRFCAVKTSNKPPPPDPLEPLNTALAVASWGVDYVVLTSVDRDDLPDGGSSHFAQTVRALKELKPGILVECLTSDFRGDLEAVSSLANSGLDVYAHNIETVRSLQRIVRDPRAGYDQSLAVLKHAKDCREGMITKSSIMLGLGETDEEVKQAMIDLRAIGVDILTLGQYLQPTERHLTVREYVTPEKFQFWKEYGESVGFRYVASGPLVRSSYRAGELFVQNLVRNNKTGSSSS.

2 disordered regions span residues 1–30 (MQSS…RGSV) and 42–61 (PTVG…RDPE). Cys-94, Cys-99, Cys-105, Cys-131, Cys-135, Cys-138, and Ser-346 together coordinate [4Fe-4S] cluster. Residues 114–335 (GEGDGIATAT…KEYGESVGFR (222 aa)) form the Radical SAM core domain.

Belongs to the radical SAM superfamily. Lipoyl synthase family. The cofactor is [4Fe-4S] cluster.

It is found in the plastid. The protein resides in the chloroplast. The catalysed reaction is [[Fe-S] cluster scaffold protein carrying a second [4Fe-4S](2+) cluster] + N(6)-octanoyl-L-lysyl-[protein] + 2 oxidized [2Fe-2S]-[ferredoxin] + 2 S-adenosyl-L-methionine + 4 H(+) = [[Fe-S] cluster scaffold protein] + N(6)-[(R)-dihydrolipoyl]-L-lysyl-[protein] + 4 Fe(3+) + 2 hydrogen sulfide + 2 5'-deoxyadenosine + 2 L-methionine + 2 reduced [2Fe-2S]-[ferredoxin]. The protein operates within protein modification; protein lipoylation via endogenous pathway; protein N(6)-(lipoyl)lysine from octanoyl-[acyl-carrier-protein]: step 2/2. Functionally, catalyzes the radical-mediated insertion of two sulfur atoms into the C-6 and C-8 positions of the octanoyl moiety bound to the lipoyl domains of lipoate-dependent enzymes, thereby converting the octanoylated domains into lipoylated derivatives. The chain is Lipoyl synthase, chloroplastic from Sorghum bicolor (Sorghum).